Reading from the N-terminus, the 509-residue chain is O-acetyltransferase anaAT (509 aa).

The protein belongs to the fumigaclavine B O-acetyltransferase family. As to quaternary structure, monomer.

The catalysed reaction is (2R,3S,11R)-aszonalenin + acetyl-CoA = (2R,3S,11R)-acetylaszonalenin + CoA. The protein operates within alkaloid biosynthesis. O-acetyltransferase; part of the gene cluster that mediates the biosynthesis of the prenylated pyrroloindoline diketopiperazine acetylaszonalenin. The first step in the pathway is the formation of (R)-benzodiazepinedione by condensation of tryptophan and anthranilic acid catalyzed by the non-ribosomal peptide synthetase anaPS. The prenyltransferase anaPT then converts (R)-benzodiazepinedione to aszonalenin in the presence of dimethylallyl diphosphate (DMAPP) via C3-prenylation. The last step in the biosynthesis of acetylaszonalenin via acetylation of aszonalenin at position N1 catalyzed by anaAT. This Neosartorya fischeri (strain ATCC 1020 / DSM 3700 / CBS 544.65 / FGSC A1164 / JCM 1740 / NRRL 181 / WB 181) (Aspergillus fischerianus) protein is O-acetyltransferase anaAT.